The primary structure comprises 364 residues: Glycerol dehydrogenase (364 aa).

Residues Asp-37, Gly-92, Lys-93, Thr-114, and Ser-117 each coordinate NAD(+). Asp-119 is a glycerol binding site. NAD(+) contacts are provided by Ser-123, Leu-125, and Tyr-129. Glycerol-binding residues include Asp-169, His-252, and His-269. Residues Asp-169, His-252, and His-269 each contribute to the Zn(2+) site.

This sequence belongs to the iron-containing alcohol dehydrogenase family. It depends on Zn(2+) as a cofactor.

It catalyses the reaction glycerol + NAD(+) = dihydroxyacetone + NADH + H(+). The protein operates within polyol metabolism; glycerol fermentation; glycerone phosphate from glycerol (oxidative route): step 1/2. Catalyzes the NAD-dependent oxidation of glycerol to dihydroxyacetone (glycerone). The chain is Glycerol dehydrogenase (gldA) from Thermotoga maritima (strain ATCC 43589 / DSM 3109 / JCM 10099 / NBRC 100826 / MSB8).